The sequence spans 206 residues: Outer-membrane lipoprotein LolB (206 aa).

Positions 1-18 (MKTFKFFTALFATAILTA) are cleaved as a signal peptide. C19 carries the N-palmitoyl cysteine lipid modification. C19 carries the S-diacylglycerol cysteine lipid modification.

It belongs to the LolB family. In terms of assembly, monomer.

It is found in the cell outer membrane. Its function is as follows. Plays a critical role in the incorporation of lipoproteins in the outer membrane after they are released by the LolA protein. This Haemophilus influenzae (strain PittGG) protein is Outer-membrane lipoprotein LolB.